Consider the following 327-residue polypeptide: Phosphate acyltransferase (327 aa).

It belongs to the PlsX family. Homodimer. Probably interacts with PlsY.

The protein resides in the cytoplasm. It catalyses the reaction a fatty acyl-[ACP] + phosphate = an acyl phosphate + holo-[ACP]. It participates in lipid metabolism; phospholipid metabolism. Functionally, catalyzes the reversible formation of acyl-phosphate (acyl-PO(4)) from acyl-[acyl-carrier-protein] (acyl-ACP). This enzyme utilizes acyl-ACP as fatty acyl donor, but not acyl-CoA. The polypeptide is Phosphate acyltransferase (Thermosipho africanus (strain TCF52B)).